Reading from the N-terminus, the 71-residue chain is ATP synthase subunit c (71 aa).

Helical transmembrane passes span 5–25 (AIGI…AIIV) and 47–67 (FIGA…AFLL).

Belongs to the ATPase C chain family. In terms of assembly, F-type ATPases have 2 components, F(1) - the catalytic core - and F(0) - the membrane proton channel. F(1) has five subunits: alpha(3), beta(3), gamma(1), delta(1), epsilon(1). F(0) has three main subunits: a(1), b(2) and c(10-14). The alpha and beta chains form an alternating ring which encloses part of the gamma chain. F(1) is attached to F(0) by a central stalk formed by the gamma and epsilon chains, while a peripheral stalk is formed by the delta and b chains.

The protein resides in the cell membrane. Functionally, f(1)F(0) ATP synthase produces ATP from ADP in the presence of a proton or sodium gradient. F-type ATPases consist of two structural domains, F(1) containing the extramembraneous catalytic core and F(0) containing the membrane proton channel, linked together by a central stalk and a peripheral stalk. During catalysis, ATP synthesis in the catalytic domain of F(1) is coupled via a rotary mechanism of the central stalk subunits to proton translocation. Its function is as follows. Key component of the F(0) channel; it plays a direct role in translocation across the membrane. A homomeric c-ring of between 10-14 subunits forms the central stalk rotor element with the F(1) delta and epsilon subunits. This is ATP synthase subunit c from Shouchella clausii (strain KSM-K16) (Alkalihalobacillus clausii).